A 108-amino-acid chain; its full sequence is uncharacterized protein (108 aa).

N-linked (GlcNAc...) asparagine glycosylation occurs at Asn-33.

Post-translationally, N-glycosylated.

This is an uncharacterized protein from Saccharomyces cerevisiae (strain ATCC 204508 / S288c) (Baker's yeast).